A 227-amino-acid polypeptide reads, in one-letter code: ATP-dependent Clp protease proteolytic subunit 1 (227 aa).

The Nucleophile role is filled by serine 124. Residue histidine 149 is part of the active site.

Belongs to the peptidase S14 family. As to quaternary structure, fourteen ClpP subunits assemble into 2 heptameric rings which stack back to back to give a disk-like structure with a central cavity, resembling the structure of eukaryotic proteasomes.

It is found in the cytoplasm. It carries out the reaction Hydrolysis of proteins to small peptides in the presence of ATP and magnesium. alpha-casein is the usual test substrate. In the absence of ATP, only oligopeptides shorter than five residues are hydrolyzed (such as succinyl-Leu-Tyr-|-NHMec, and Leu-Tyr-Leu-|-Tyr-Trp, in which cleavage of the -Tyr-|-Leu- and -Tyr-|-Trp bonds also occurs).. Functionally, cleaves peptides in various proteins in a process that requires ATP hydrolysis. Has a chymotrypsin-like activity. Plays a major role in the degradation of misfolded proteins. The chain is ATP-dependent Clp protease proteolytic subunit 1 from Rhodopirellula baltica (strain DSM 10527 / NCIMB 13988 / SH1).